Reading from the N-terminus, the 235-residue chain is 2-C-methyl-D-erythritol 4-phosphate cytidylyltransferase (235 aa).

The protein belongs to the IspD/TarI cytidylyltransferase family. IspD subfamily.

It carries out the reaction 2-C-methyl-D-erythritol 4-phosphate + CTP + H(+) = 4-CDP-2-C-methyl-D-erythritol + diphosphate. The protein operates within isoprenoid biosynthesis; isopentenyl diphosphate biosynthesis via DXP pathway; isopentenyl diphosphate from 1-deoxy-D-xylulose 5-phosphate: step 2/6. Catalyzes the formation of 4-diphosphocytidyl-2-C-methyl-D-erythritol from CTP and 2-C-methyl-D-erythritol 4-phosphate (MEP). The polypeptide is 2-C-methyl-D-erythritol 4-phosphate cytidylyltransferase (Ectopseudomonas mendocina (strain ymp) (Pseudomonas mendocina)).